Consider the following 255-residue polypeptide: 2-succinyl-6-hydroxy-2,4-cyclohexadiene-1-carboxylate synthase (255 aa).

The protein belongs to the AB hydrolase superfamily. MenH family. Monomer.

It catalyses the reaction 5-enolpyruvoyl-6-hydroxy-2-succinyl-cyclohex-3-ene-1-carboxylate = (1R,6R)-6-hydroxy-2-succinyl-cyclohexa-2,4-diene-1-carboxylate + pyruvate. Its pathway is quinol/quinone metabolism; 1,4-dihydroxy-2-naphthoate biosynthesis; 1,4-dihydroxy-2-naphthoate from chorismate: step 3/7. It functions in the pathway quinol/quinone metabolism; menaquinone biosynthesis. Functionally, catalyzes a proton abstraction reaction that results in 2,5-elimination of pyruvate from 2-succinyl-5-enolpyruvyl-6-hydroxy-3-cyclohexene-1-carboxylate (SEPHCHC) and the formation of 2-succinyl-6-hydroxy-2,4-cyclohexadiene-1-carboxylate (SHCHC). In Serratia proteamaculans (strain 568), this protein is 2-succinyl-6-hydroxy-2,4-cyclohexadiene-1-carboxylate synthase.